Consider the following 476-residue polypeptide: 3-isopropylmalate dehydratase large subunit (476 aa).

3 residues coordinate [4Fe-4S] cluster: Cys-357, Cys-417, and Cys-420.

It belongs to the aconitase/IPM isomerase family. LeuC type 1 subfamily. Heterodimer of LeuC and LeuD. [4Fe-4S] cluster is required as a cofactor.

The catalysed reaction is (2R,3S)-3-isopropylmalate = (2S)-2-isopropylmalate. It functions in the pathway amino-acid biosynthesis; L-leucine biosynthesis; L-leucine from 3-methyl-2-oxobutanoate: step 2/4. In terms of biological role, catalyzes the isomerization between 2-isopropylmalate and 3-isopropylmalate, via the formation of 2-isopropylmaleate. The protein is 3-isopropylmalate dehydratase large subunit of Mycolicibacterium paratuberculosis (strain ATCC BAA-968 / K-10) (Mycobacterium paratuberculosis).